Here is a 150-residue protein sequence, read N- to C-terminus: Large ribosomal subunit protein bL9 (150 aa).

This sequence belongs to the bacterial ribosomal protein bL9 family.

Functionally, binds to the 23S rRNA. This is Large ribosomal subunit protein bL9 from Wigglesworthia glossinidia brevipalpis.